A 210-amino-acid polypeptide reads, in one-letter code: MPNARVFKILAAAKLNNIALEIPAYQHGVTNKSAEFLLKFPAGKVPAFEGPDGFCLVESDAIAQYVAQSGPQASQLLGQDAMSSAKIRQWISFFAEEIYPTVLDLVMWRVGLGAFDETTETKALTQLVYGLSVLEKHLGTGALLVGDKLTLADLTGASTLLWAFMHIVDEPMRQQYPNVVAWYLKVVQNEEVEEVFGKPNFIEKRRLGAK.

Positions Met-1 to Ser-74 constitute a GST N-terminal domain. Residues Asp-80 to Arg-206 form the GST C-terminal domain.

It belongs to the GST superfamily.

Glutathione S-transferase-like protein; part of the gene cluster that mediates the biosynthesis of the mycotoxin fusarin C. Within the cluster, FUS1, FUS2, FUS8 and FUS9 are sufficient for fusarin production. The other FUS cluster members are not essential for fusarin C biosynthesis. The protein is Glutathione S-transferase-like protein FUS3 of Gibberella fujikuroi (strain CBS 195.34 / IMI 58289 / NRRL A-6831) (Bakanae and foot rot disease fungus).